The sequence spans 111 residues: Kalata-B7 (111 aa).

Positions 1-28 are cleaved as a signal peptide; it reads MAKFTNCLALCLLLAAVVGAFGVELSEA. Residues 29–75 constitute a propeptide that is removed on maturation; sequence DKSAVVNEIAEKMALQEMLDGVDKLFLRKMKSSETTLTMFLKEMQLK. The cyclopeptide (Gly-Asn) cross-link spans 76 to 104; that stretch reads GLPVCGETCTLGTCYTQGCTCSWPICKRN. Intrachain disulfides connect Cys-80–Cys-94, Cys-84–Cys-96, and Cys-89–Cys-101. The propeptide occupies 105 to 111; that stretch reads GLPDVAA.

Kalata-B7 is a cyclic peptide.

Its function is as follows. Probably participates in a plant defense mechanism. Has hemolytic activity. This Oldenlandia affinis protein is Kalata-B7 (OAK3).